The primary structure comprises 127 residues: Small ribosomal subunit protein uS12 (127 aa).

The tract at residues 8 to 28 is disordered; that stretch reads IRTEREKARQKTKSPALKQCP. Asp-89 carries the 3-methylthioaspartic acid modification. Residues 102–127 are disordered; the sequence is LDTAGVKDRKQGRSKYGTKRPKEAKK. Positions 113 to 127 are enriched in basic residues; sequence GRSKYGTKRPKEAKK.

The protein belongs to the universal ribosomal protein uS12 family. Part of the 30S ribosomal subunit. Contacts proteins S8 and S17. May interact with IF1 in the 30S initiation complex.

In terms of biological role, with S4 and S5 plays an important role in translational accuracy. Its function is as follows. Interacts with and stabilizes bases of the 16S rRNA that are involved in tRNA selection in the A site and with the mRNA backbone. Located at the interface of the 30S and 50S subunits, it traverses the body of the 30S subunit contacting proteins on the other side and probably holding the rRNA structure together. The combined cluster of proteins S8, S12 and S17 appears to hold together the shoulder and platform of the 30S subunit. This chain is Small ribosomal subunit protein uS12, found in Nostoc sp. (strain PCC 7120 / SAG 25.82 / UTEX 2576).